The primary structure comprises 497 residues: MVSLLHKFLENASGKKGQDLASTAYLAALDHLLHSFPSIGKSIIDELKSQRSRLKMIASENYASISVQLAMGNLLTDKYCEGSPFKRFYSCCENVDAIEWECVETAKELFGAESAFVQPHSGADANLLAIMAIITQKIQGPAVKRLGYKTINDLTDKEYTELKAEIGSHVCLGPSLNSGGHLTHGTVRLNIMSKLMRCVPYEVNKKTECFDYSEIARLVRTYKPTVLIAGYSSYSRRLNFSTLKQIADDCGAVLWVDMAHFAGLVAGGVFIEEENPIPFADIITTTTHKTLRGPRGGLVLASKEYDAVINRACPLMMGGPLPHVIAAKAVALKEALTVDFKKYAHQVVDNARTLAEHFQKQGLRLLTGGTDNHMLIIDLTSLGISGRIAEDILSSVGIAVNRNTIPSDAVGKWDTSGIRLGTPALTTLGMGSDEMEEVANIIVKVLRNITLRRNADDSFSKSEGELPENIAEEARARVAGLLSRFPLYPEIDLETLV.

(6S)-5,6,7,8-tetrahydrofolate contacts are provided by residues Leu-176 and 180–182 (GHL). Lys-289 is modified (N6-(pyridoxal phosphate)lysine).

This sequence belongs to the SHMT family. As to quaternary structure, homodimer. It depends on pyridoxal 5'-phosphate as a cofactor.

The protein localises to the cytoplasm. The enzyme catalyses (6R)-5,10-methylene-5,6,7,8-tetrahydrofolate + glycine + H2O = (6S)-5,6,7,8-tetrahydrofolate + L-serine. It participates in one-carbon metabolism; tetrahydrofolate interconversion. Its pathway is amino-acid biosynthesis; glycine biosynthesis; glycine from L-serine: step 1/1. In terms of biological role, catalyzes the reversible interconversion of serine and glycine with tetrahydrofolate (THF) serving as the one-carbon carrier. This reaction serves as the major source of one-carbon groups required for the biosynthesis of purines, thymidylate, methionine, and other important biomolecules. Also exhibits THF-independent aldolase activity toward beta-hydroxyamino acids, producing glycine and aldehydes, via a retro-aldol mechanism. The sequence is that of Serine hydroxymethyltransferase from Chlamydia abortus (strain DSM 27085 / S26/3) (Chlamydophila abortus).